Here is a 671-residue protein sequence, read N- to C-terminus: Spartin (671 aa).

N-acetylmethionine is present on Met1. Residues 16-94 enclose the MIT domain; sequence IKEAYEKAFM…LQNVRTRLEI (79 aa). The disordered stretch occupies residues 110–175; that stretch reads VPKLYPEFPP…CPAEAPPAYS (66 aa). A compositionally biased stretch (basic and acidic residues) spans 118-128; it reads PPKDACKKSPE. Ser126 carries the post-translational modification Phosphoserine. Residues 143 to 158 show a composition bias toward low complexity; that stretch reads GSASAACAGPSGAPSA. Residues 159–174 are compositionally biased toward pro residues; the sequence is LPVPSPSCPAEAPPAY. The segment at 190-385 is ubiquitin-binding region (UBR) domain; sequence DSGEFSSVGE…SIDQGSKDAR (196 aa). An LC3-interacting region (LIR); mediates interaction with MAP1LC3A AND MAP1LC3C motif is present at residues 193-200; sequence EFSSVGED. A disordered region spans residues 346 to 421; it reads FQIPGRSSHP…SSEEKSKELP (76 aa). Lys360 is covalently cross-linked (Glycyl lysine isopeptide (Lys-Gly) (interchain with G-Cter in ubiquitin)). Residues 369–379 are compositionally biased toward low complexity; sequence QSSSSGSSIDQ. The span at 384 to 393 shows a compositional bias: basic residues; that stretch reads ARHKGKRGKK. Residues 431 to 615 form the Senescence domain; the sequence is ILSGASWVSW…YNIDNIGIKA (185 aa). The interval 435 to 507 is required for localization to lipid droplets; sequence ASWVSWGLVK…LVDGVCTVAN (73 aa). Ser474 carries the phosphoserine modification. Positions 635–671 are disordered; the sequence is VERPQRESQGGATSTEGRRDIGKQVEEEKPGAGKKDK. The segment covering 650–671 has biased composition (basic and acidic residues); it reads EGRRDIGKQVEEEKPGAGKKDK.

In terms of assembly, interacts with ITCH and WWP1. Interacts (via MIT domain) with IST1; leading to the recruitment of SPART to midbodies. Interacts with MAP1LC3A and MAP1LC3C. In terms of processing, ubiquitinated; ubiquitination does not require ITCH and WWP1. In terms of tissue distribution, brain (at protein level).

Its subcellular location is the cytoplasm. It localises to the midbody. The protein resides in the lipid droplet. Functionally, lipophagy receptor that plays an important role in lipid droplet (LD) turnover in motor neurons. Localizes to LDs and interacts with components of the autophagy machinery, such as MAP1LC3A/C proteins to deliver LDs to autophagosomes for degradation via lipophagy. Lipid transfer protein required for lipid droplet degradation, including by lipophagy. Can bind and transfer all lipid species found in lipid droplets, from phospholipids to triglycerides and sterol esters but the direction of lipid transfer by spartin and its cargos are unknown. May be implicated in endosomal trafficking, or microtubule dynamics, or both. Participates in cytokinesis. This Mus musculus (Mouse) protein is Spartin.